The primary structure comprises 128 residues: Large-conductance mechanosensitive channel (128 aa).

2 consecutive transmembrane segments (helical) span residues 10 to 30 (FAMRGNVVDMAVGVIIGGAFG) and 76 to 96 (GMFIQNVFDFIIIAFAIFLMI).

Belongs to the MscL family. Homopentamer.

The protein resides in the cell inner membrane. Channel that opens in response to stretch forces in the membrane lipid bilayer. May participate in the regulation of osmotic pressure changes within the cell. In Actinobacillus succinogenes (strain ATCC 55618 / DSM 22257 / CCUG 43843 / 130Z), this protein is Large-conductance mechanosensitive channel.